The following is a 168-amino-acid chain: Photosystem I assembly protein Ycf3 (168 aa).

3 TPR repeats span residues 35–68, 72–105, and 120–153; these read AFTY…EIDP, SYIL…NPFL, and GEQA…TPGN.

This sequence belongs to the Ycf3 family.

It is found in the plastid. Its subcellular location is the chloroplast thylakoid membrane. In terms of biological role, essential for the assembly of the photosystem I (PSI) complex. May act as a chaperone-like factor to guide the assembly of the PSI subunits. This Piper cenocladum (Ant piper) protein is Photosystem I assembly protein Ycf3.